The sequence spans 465 residues: Neutrophil collagenase (465 aa).

Positions 1–20 are cleaved as a signal peptide; it reads MFRLKTLPLLIFLHTQLANA. A propeptide spans 21-100 (activation peptide); the sequence is FPVPEHLEEK…CGVPDSGDFL (80 aa). A glycan (N-linked (GlcNAc...) asparagine) is linked at asparagine 55. The Cysteine switch motif lies at 89–96; it reads PRCGVPDS. Cysteine 91 serves as a coordination point for Zn(2+). N-linked (GlcNAc...) asparagine glycosylation is present at asparagine 112. Aspartate 157 is a Ca(2+) binding site. The Zn(2+) site is built by histidine 167 and aspartate 169. Residues aspartate 174, glycine 175, asparagine 177, and isoleucine 179 each coordinate Ca(2+). Histidine 182 is a Zn(2+) binding site. Residues glycine 189, glycine 191, and aspartate 193 each contribute to the Ca(2+) site. Position 195 (histidine 195) interacts with Zn(2+). Ca(2+) is bound by residues aspartate 197 and glutamate 200. Histidine 217 lines the Zn(2+) pocket. Glutamate 218 is a catalytic residue. Zn(2+) is bound by residues histidine 221 and histidine 227. Hemopexin repeat units follow at residues 276–325, 326–372, 374–420, and 421–464; these read PKAC…WPFL, PNGL…GFPR, VQAI…FPGV, and NCRV…WLNC. A disulfide bridge links cysteine 279 with cysteine 464. Aspartate 286 contributes to the Ca(2+) binding site. Positions 378 and 425 each coordinate Ca(2+).

The protein belongs to the peptidase M10A family. The cofactor is Ca(2+). Requires Zn(2+) as cofactor. In terms of tissue distribution, neutrophils. Expressed in uterus. Low levels in kidney and muscle.

It localises to the cytoplasmic granule. The protein localises to the secreted. Its subcellular location is the extracellular space. It is found in the extracellular matrix. The catalysed reaction is Cleavage of interstitial collagens in the triple helical domain. Unlike EC 3.4.24.7, this enzyme cleaves type III collagen more slowly than type I.. With respect to regulation, cannot be activated without removal of the activation peptide. Activated by matrilysin. In terms of biological role, can degrade fibrillar type I, II, and III collagens. May play a role in the degradation of collagen fibers during uterine involution. The sequence is that of Neutrophil collagenase (Mmp8) from Mus musculus (Mouse).